Consider the following 261-residue polypeptide: Glandular kallikrein-7, submandibular/renal (261 aa).

The N-terminal stretch at 1–18 (MWFLILFLDLSLGQIDAA) is a signal peptide. The propeptide at 19 to 24 (PPGQSR) is activation peptide. A Peptidase S1 domain is found at 25–258 (VIGGYKCEKN…FTSWIKEVMK (234 aa)). Intrachain disulfides connect cysteine 31–cysteine 173, cysteine 50–cysteine 66, cysteine 152–cysteine 219, cysteine 184–cysteine 198, and cysteine 209–cysteine 234. Histidine 65 functions as the Charge relay system in the catalytic mechanism. N-linked (GlcNAc...) asparagine glycosylation occurs at asparagine 108. The active-site Charge relay system is the aspartate 120. Residue serine 213 is the Charge relay system of the active site.

It belongs to the peptidase S1 family. Kallikrein subfamily. In terms of tissue distribution, kidney and submandibular gland. Not expressed in liver, pancreas, spleen, parotid, testis, cortex, prostate, ovary and pituitary.

It catalyses the reaction Preferential cleavage of Arg-|-Xaa bonds in small molecule substrates. Highly selective action to release kallidin (lysyl-bradykinin) from kininogen involves hydrolysis of Met-|-Xaa or Leu-|-Xaa.. Functionally, glandular kallikreins cleave Met-Lys and Arg-Ser bonds in kininogen to release Lys-bradykinin. Predominant kallikrein protein in the kidney. This chain is Glandular kallikrein-7, submandibular/renal (Klk7), found in Rattus norvegicus (Rat).